Reading from the N-terminus, the 124-residue chain is Small ribosomal subunit protein uS12 (124 aa).

The residue at position 89 (Asp89) is a 3-methylthioaspartic acid. The interval 104–124 (TAGVKDRRQSRSKYGAKAPKE) is disordered.

Belongs to the universal ribosomal protein uS12 family. As to quaternary structure, part of the 30S ribosomal subunit. Contacts proteins S8 and S17. May interact with IF1 in the 30S initiation complex.

In terms of biological role, with S4 and S5 plays an important role in translational accuracy. Its function is as follows. Interacts with and stabilizes bases of the 16S rRNA that are involved in tRNA selection in the A site and with the mRNA backbone. Located at the interface of the 30S and 50S subunits, it traverses the body of the 30S subunit contacting proteins on the other side and probably holding the rRNA structure together. The combined cluster of proteins S8, S12 and S17 appears to hold together the shoulder and platform of the 30S subunit. This is Small ribosomal subunit protein uS12 from Synechococcus sp. (strain CC9605).